Here is a 323-residue protein sequence, read N- to C-terminus: Serine/threonine-protein phosphatase PP1-gamma catalytic subunit B (323 aa).

Mn(2+)-binding residues include aspartate 64, histidine 66, aspartate 92, and asparagine 124. Residue histidine 125 is the Proton donor of the active site. Mn(2+)-binding residues include histidine 173 and histidine 248. A disordered region spans residues 301 to 323; it reads KKKPNASRPVTPPRGIITKQAKK.

It belongs to the PPP phosphatase family. PP-1 subfamily. In terms of assembly, PP1 comprises a catalytic subunit, ppp1c1, ppp1cb or ppp1cc, which is folded into its native form by inhibitor 2 and glycogen synthetase kinase 3, and then is complexed to one or several targeting or regulatory subunits. The cofactor is Mn(2+).

It localises to the cytoplasm. The protein resides in the nucleus. Its subcellular location is the cleavage furrow. It is found in the nucleolus. The protein localises to the nucleoplasm. It localises to the chromosome. The protein resides in the centromere. Its subcellular location is the kinetochore. It is found in the nucleus speckle. The protein localises to the midbody. It localises to the mitochondrion. It carries out the reaction O-phospho-L-seryl-[protein] + H2O = L-seryl-[protein] + phosphate. The catalysed reaction is O-phospho-L-threonyl-[protein] + H2O = L-threonyl-[protein] + phosphate. Protein phosphatase that associates with over 200 regulatory proteins to form highly specific holoenzymes which dephosphorylate hundreds of biological targets. Protein phosphatase 1 (PP1) is essential for cell division, and participates in the regulation of glycogen metabolism, muscle contractility and protein synthesis. Promotes nuclear envelope reassembly by targeting nuclear membrane vesicles to chromatin at the end of mitosis. Acts by dephosphorylating membrane proteins such as lamin B receptor (lbr) to regulate the binding of membrane proteins to chromatin. In Xenopus laevis (African clawed frog), this protein is Serine/threonine-protein phosphatase PP1-gamma catalytic subunit B (ppp1cc-b).